The sequence spans 193 residues: Acyl carrier protein phosphodiesterase (193 aa).

Belongs to the AcpH family.

The enzyme catalyses holo-[ACP] + H2O = apo-[ACP] + (R)-4'-phosphopantetheine + H(+). Converts holo-ACP to apo-ACP by hydrolytic cleavage of the phosphopantetheine prosthetic group from ACP. The chain is Acyl carrier protein phosphodiesterase from Salmonella choleraesuis (strain SC-B67).